The primary structure comprises 1832 residues: COPII coat assembly protein sec16 (1832 aa).

Disordered stretches follow at residues Met1–Gln163, Gly183–Glu209, Leu240–Glu269, Gln345–Pro863, Pro1420–Pro1482, Glu1509–Glu1679, and Val1692–Lys1832. Residues Glu57–Gln74 are compositionally biased toward polar residues. Residues Ser91 to Glu118 are compositionally biased toward basic and acidic residues. The span at Asn123–Ile133 shows a compositional bias: polar residues. Positions Leu137–Glu151 are enriched in basic and acidic residues. 3 stretches are compositionally biased toward acidic residues: residues Gln257–Glu269, Leu348–Asp361, and Glu369–Thr383. The span at Val422–Ser457 shows a compositional bias: polar residues. The segment covering Ser471 to Tyr480 has biased composition (basic and acidic residues). The segment covering Val510 to Pro524 has biased composition (pro residues). 2 stretches are compositionally biased toward polar residues: residues Ser528–Gln546 and Asn590–Ile603. Residues Asn622 to Ser636 are compositionally biased toward low complexity. A compositionally biased stretch (pro residues) spans Lys653 to Pro665. A compositionally biased stretch (polar residues) spans Tyr679–Gly688. The segment covering Tyr705–Pro721 has biased composition (basic and acidic residues). The segment covering Ser738 to Lys747 has biased composition (polar residues). Residues Pro814–Arg829 are compositionally biased toward low complexity. Polar residues-rich tracts occupy residues His845–Val854, Gln1428–Pro1439, Ser1513–Tyr1538, and Gln1550–Asp1559. 2 stretches are compositionally biased toward basic and acidic residues: residues Glu1594–Met1603 and Lys1620–Lys1644. The span at Gly1725 to Thr1736 shows a compositional bias: pro residues. Low complexity predominate over residues Gly1737 to Ser1756. A compositionally biased stretch (pro residues) spans Pro1757–Ile1769.

The protein belongs to the SEC16 family.

The protein resides in the endoplasmic reticulum membrane. In terms of biological role, involved in the initiation of assembly of the COPII coat required for the formation of transport vesicles from the endoplasmic reticulum (ER) and the selection of cargo molecules. Also involved in autophagy. The polypeptide is COPII coat assembly protein sec16 (sec16) (Aspergillus fumigatus (strain ATCC MYA-4609 / CBS 101355 / FGSC A1100 / Af293) (Neosartorya fumigata)).